Here is a 208-residue protein sequence, read N- to C-terminus: MTLQTFTSTDFEVFTVDGLEERMSAIKTNIHPKLEALGEQFAEYLSQQTDESFFYHVAKHARRKVNPPNDTWVAFSTNKRGYKMLPHFQIGLWGTHAFIYFGLIYECPQKVETAHAFLEHLNDLKTNIPNDFVWSIDHTKPGVKLHKTLETEDLQKMIERLATVKKAELLVGIHISPEEFSAMTNEQFLAKIESTMQPLLPLYALCNR.

It belongs to the UPF0637 family.

This Bacillus mycoides (strain KBAB4) (Bacillus weihenstephanensis) protein is UPF0637 protein BcerKBAB4_3786.